A 421-amino-acid polypeptide reads, in one-letter code: Forkhead box protein fkh-3 (421 aa).

Residues 118–218 constitute a DNA-binding region (fork-head); that stretch reads RPPISYVALC…SDADFDFFRK (101 aa).

It is found in the nucleus. In terms of biological role, transcription factor. Binds to DNA sequence motif 5'-CTGTTTCA-3'. Regulates expression of a class of small RNAs, known as 21U-RNAs, perhaps acting redundantly with fkh-4 and fkh-5. This Caenorhabditis elegans protein is Forkhead box protein fkh-3.